Consider the following 354-residue polypeptide: Uroporphyrinogen decarboxylase (354 aa).

Residues Arg27–Arg31, Asp77, Tyr154, Thr209, and His327 contribute to the substrate site.

The protein belongs to the uroporphyrinogen decarboxylase family. Homodimer.

The protein resides in the cytoplasm. The enzyme catalyses uroporphyrinogen III + 4 H(+) = coproporphyrinogen III + 4 CO2. Its pathway is porphyrin-containing compound metabolism; protoporphyrin-IX biosynthesis; coproporphyrinogen-III from 5-aminolevulinate: step 4/4. Its function is as follows. Catalyzes the decarboxylation of four acetate groups of uroporphyrinogen-III to yield coproporphyrinogen-III. This is Uroporphyrinogen decarboxylase from Sodalis glossinidius (strain morsitans).